The primary structure comprises 441 residues: ACT domain-containing protein ACR8 (441 aa).

ACT domains follow at residues 34–110, 115–196, 248–324, and 326–405; these read IVKV…NIEV, ALEL…SAAK, VVNV…ALEG, and RLEL…TMYH.

As to expression, expressed in roots, leaves, flowers and siliques.

In terms of biological role, may bind amino acids. The polypeptide is ACT domain-containing protein ACR8 (Arabidopsis thaliana (Mouse-ear cress)).